The primary structure comprises 168 residues: MLVYQDLLTGDELLSDSFPYREIENGILWEVDGKWVVQGAIDVDIGANPSAEGGGDDEGVDDQAVKVVDIVDTFRLQEQPPFDKKQFVTFMKRYIKNLSAKLDAEKQEEFKKNIEGATKYLLGKLKDLQFFVGESMHDDGGLVFAYYKDGATDPTFLYFSHGLKEVKC.

The region spanning 1-168 is the TCTP domain; sequence MLVYQDLLTG…FSHGLKEVKC (168 aa).

It belongs to the TCTP family.

It localises to the cytoplasm. Involved in calcium binding and microtubule stabilization. The sequence is that of Translationally-controlled tumor protein homolog (TCTP) from Oryza sativa subsp. japonica (Rice).